The chain runs to 179 residues: Plasmid-derived single-stranded DNA-binding protein (179 aa).

The 105-residue stretch at 6-110 folds into the SSB domain; the sequence is INKVILVGRL…ILVKTTGTMQ (105 aa). The DNA-binding element occupies 55–61; it reads WHRVVLF. A disordered region spans residues 117-179; the sequence is GAQTQPEEGQ…DYGFSDDIPF (63 aa). Residues 118–132 show a composition bias toward polar residues; that stretch reads AQTQPEEGQQFSGQP. A compositionally biased stretch (basic residues) spans 145–155; sequence GGAKTKGRGRK. Positions 167-179 are enriched in acidic residues; that stretch reads EGDDYGFSDDIPF.

Homotetramer.

In terms of biological role, may contribute to the conjugative processing of DNA. It has a functional relationship with Psi (plasmid-mediated sos inhibition) proteins. In Escherichia coli (strain K12), this protein is Plasmid-derived single-stranded DNA-binding protein (ssbF).